Consider the following 392-residue polypeptide: L-rhamnonate dehydratase (392 aa).

Substrate-binding residues include histidine 22 and arginine 48. Mg(2+) is bound by residues aspartate 214, glutamate 240, and glutamate 268. Catalysis depends on histidine 318, which acts as the Proton acceptor. A substrate-binding site is contributed by glutamate 338.

The protein belongs to the mandelate racemase/muconate lactonizing enzyme family. RhamD subfamily. Homooctamer; tetramer of dimers. Mg(2+) is required as a cofactor.

It catalyses the reaction L-rhamnonate = 2-dehydro-3-deoxy-L-rhamnonate + H2O. Functionally, catalyzes the dehydration of L-rhamnonate to 2-keto-3-deoxy-L-rhamnonate (KDR). This is L-rhamnonate dehydratase from Burkholderia orbicola (strain MC0-3).